A 213-amino-acid chain; its full sequence is LexA repressor (213 aa).

Positions 27 to 47 form a DNA-binding region, H-T-H motif; it reads QTEIARAFGFKGVRAAQYHLE. Residues Ser133 and Lys170 each act as for autocatalytic cleavage activity in the active site.

Belongs to the peptidase S24 family. In terms of assembly, homodimer.

The catalysed reaction is Hydrolysis of Ala-|-Gly bond in repressor LexA.. Its function is as follows. Represses a number of genes involved in the response to DNA damage (SOS response), including recA and lexA. In the presence of single-stranded DNA, RecA interacts with LexA causing an autocatalytic cleavage which disrupts the DNA-binding part of LexA, leading to derepression of the SOS regulon and eventually DNA repair. This chain is LexA repressor, found in Xanthomonas campestris.